Reading from the N-terminus, the 210-residue chain is uncharacterized protein (210 aa).

The first 20 residues, 1–20 (MRVITLSGITLFLLASLASA), serve as a signal peptide directing secretion. Topologically, residues 21–175 (IELTFKLENQ…YSTVKSTQAR (155 aa)) are lumenal. The 84-residue stretch at 32-115 (KQCYYLDSFH…DKIVTMEITM (84 aa)) folds into the GOLD domain. N165 carries an N-linked (GlcNAc...) asparagine glycan. A helical transmembrane segment spans residues 176–196 (IFWFSLAESIMVVALSALQVF). The Cytoplasmic portion of the chain corresponds to 197 to 210 (IVKTFFKRSGRRGV).

Belongs to the EMP24/GP25L family.

The protein localises to the endoplasmic reticulum membrane. This is an uncharacterized protein from Schizosaccharomyces pombe (strain 972 / ATCC 24843) (Fission yeast).